Consider the following 84-residue polypeptide: Small ribosomal subunit protein uS15 (84 aa).

Belongs to the universal ribosomal protein uS15 family. As to quaternary structure, part of the 30S ribosomal subunit. Forms a bridge to the 50S subunit in the 70S ribosome, contacting the 23S rRNA.

Functionally, one of the primary rRNA binding proteins, it binds directly to 16S rRNA where it helps nucleate assembly of the platform of the 30S subunit by binding and bridging several RNA helices of the 16S rRNA. Forms an intersubunit bridge (bridge B4) with the 23S rRNA of the 50S subunit in the ribosome. The polypeptide is Small ribosomal subunit protein uS15 (Thermosipho africanus (strain TCF52B)).